Consider the following 353-residue polypeptide: Cytochrome bc1 complex Rieske iron-sulfur subunit (353 aa).

The segment at 1-51 is disordered; that stretch reads MSSQDIPEENLPAEQDRPHGAAARPADETNPFADPGLPPHEPRVQDVDERA. Residues 40-51 are compositionally biased toward basic and acidic residues; that stretch reads HEPRVQDVDERA. A run of 3 helical transmembrane segments spans residues 60 to 80, 99 to 119, and 164 to 184; these read ALLF…FVAI, FALG…AVHW, and LIRN…VVLL. Residues 246–336 enclose the Rieske domain; that stretch reads KAALMIIRLE…IGVNDEGYLE (91 aa). 4 residues coordinate [2Fe-2S] cluster: C279, H281, C298, and H301. A disulfide bond links C284 and C300.

The protein belongs to the Rieske iron-sulfur protein family. In terms of assembly, the cytochrome bc1 complex is composed of a cytochrome b (QcrB), the Rieske iron-sulfur protein (QcrA) and a diheme cytochrome c (QcrC) subunit. Requires [2Fe-2S] cluster as cofactor.

Its subcellular location is the cell membrane. Functionally, iron-sulfur subunit of the cytochrome bc1 complex, an essential component of the respiratory electron transport chain required for ATP synthesis. The bc1 complex catalyzes the oxidation of menaquinol and the reduction of cytochrome c in the respiratory chain. The bc1 complex operates through a Q-cycle mechanism that couples electron transfer to generation of the proton gradient that drives ATP synthesis. This chain is Cytochrome bc1 complex Rieske iron-sulfur subunit (qcrA), found in Streptomyces coelicolor (strain ATCC BAA-471 / A3(2) / M145).